A 383-amino-acid polypeptide reads, in one-letter code: uncharacterized protein (383 aa).

Residues Cys-12, Cys-18, Cys-21, and Cys-88 each contribute to the [4Fe-4S] cluster site. Residues Gln-219, Phe-246, Glu-267, and Asp-314 each contribute to the S-adenosyl-L-methionine site. Cys-341 (nucleophile) is an active-site residue.

Belongs to the class I-like SAM-binding methyltransferase superfamily. RNA M5U methyltransferase family.

This is an uncharacterized protein from Protochlamydia amoebophila (strain UWE25).